A 375-amino-acid chain; its full sequence is GDP-mannose transporter GONST2 (375 aa).

9 helical membrane passes run 79-99 (LVSG…NKIV), 112-132 (MLYQ…SGVV), 141-161 (LIRV…SGMY), 165-185 (YINV…TGIG), 199-219 (WAAM…DLTF), 262-282 (MVLL…ILLG), 300-320 (VVAT…MWFL), 327-347 (TYSL…LVLF), and 349-369 (VPLS…GVVF).

This sequence belongs to the nucleotide-sugar transporter family. GDP-Mannose:GMP antiporter (GMA) (TC 2.A.7.13) subfamily. In terms of tissue distribution, expressed in rosette leaves, stems, flowers and siliques.

The protein localises to the golgi apparatus membrane. Functionally, GDP-mannose transporter that may be involved in the import of GDP-mannose from the cytoplasm into the Golgi lumen. The polypeptide is GDP-mannose transporter GONST2 (Arabidopsis thaliana (Mouse-ear cress)).